A 577-amino-acid chain; its full sequence is Urease subunit alpha (577 aa).

One can recognise a Urease domain in the interval 136 to 577 (GAIDCHVHLI…LPMAQRYFLF (442 aa)). Positions 141, 143, and 224 each coordinate Ni(2+). K224 carries the post-translational modification N6-carboxylysine. H226 is a binding site for substrate. Positions 253 and 279 each coordinate Ni(2+). Residue H327 is the Proton donor of the active site. D367 is a Ni(2+) binding site.

The protein belongs to the metallo-dependent hydrolases superfamily. Urease alpha subunit family. Heterotrimer of UreA (gamma), UreB (beta) and UreC (alpha) subunits. Three heterotrimers associate to form the active enzyme. Ni cation is required as a cofactor. Post-translationally, carboxylation allows a single lysine to coordinate two nickel ions.

It is found in the cytoplasm. It carries out the reaction urea + 2 H2O + H(+) = hydrogencarbonate + 2 NH4(+). It functions in the pathway nitrogen metabolism; urea degradation; CO(2) and NH(3) from urea (urease route): step 1/1. This is Urease subunit alpha from Mycobacterium marinum (strain ATCC BAA-535 / M).